Here is a 237-residue protein sequence, read N- to C-terminus: Ribose-5-phosphate isomerase A (237 aa).

Substrate contacts are provided by residues 33 to 36 (TGST), 90 to 93 (DGAD), and 103 to 106 (KGGG). E112 acts as the Proton acceptor in catalysis. Residue K130 coordinates substrate.

It belongs to the ribose 5-phosphate isomerase family. Homodimer.

It carries out the reaction aldehydo-D-ribose 5-phosphate = D-ribulose 5-phosphate. It functions in the pathway carbohydrate degradation; pentose phosphate pathway; D-ribose 5-phosphate from D-ribulose 5-phosphate (non-oxidative stage): step 1/1. Catalyzes the reversible conversion of ribose-5-phosphate to ribulose 5-phosphate. In Gloeothece citriformis (strain PCC 7424) (Cyanothece sp. (strain PCC 7424)), this protein is Ribose-5-phosphate isomerase A.